We begin with the raw amino-acid sequence, 102 residues long: UPF0235 protein Noc_3000 (102 aa).

This sequence belongs to the UPF0235 family.

In Nitrosococcus oceani (strain ATCC 19707 / BCRC 17464 / JCM 30415 / NCIMB 11848 / C-107), this protein is UPF0235 protein Noc_3000.